The primary structure comprises 273 residues: 3-methyl-2-oxobutanoate hydroxymethyltransferase (273 aa).

Residues Asp-49 and Asp-88 each contribute to the Mg(2+) site. Residues 49-50 (DS), Asp-88, and Lys-118 contribute to the 3-methyl-2-oxobutanoate site. Glu-120 is a binding site for Mg(2+). The Proton acceptor role is filled by Glu-187.

Belongs to the PanB family. In terms of assembly, homodecamer; pentamer of dimers. Requires Mg(2+) as cofactor.

The protein localises to the cytoplasm. The enzyme catalyses 3-methyl-2-oxobutanoate + (6R)-5,10-methylene-5,6,7,8-tetrahydrofolate + H2O = 2-dehydropantoate + (6S)-5,6,7,8-tetrahydrofolate. The protein operates within cofactor biosynthesis; (R)-pantothenate biosynthesis; (R)-pantoate from 3-methyl-2-oxobutanoate: step 1/2. Catalyzes the reversible reaction in which hydroxymethyl group from 5,10-methylenetetrahydrofolate is transferred onto alpha-ketoisovalerate to form ketopantoate. The protein is 3-methyl-2-oxobutanoate hydroxymethyltransferase of Rhizobium rhizogenes (strain K84 / ATCC BAA-868) (Agrobacterium radiobacter).